Here is a 1044-residue protein sequence, read N- to C-terminus: Translation initiation factor IF-2 (1044 aa).

The interval 31-425 (VRSASSTVEP…RKSKRAKRQE (395 aa)) is disordered. Pro residues-rich tracts occupy residues 77-98 (GPAPAARPQAPAPAQPAPPQPA) and 106-116 (APAPAPAPRPA). Residues 117-148 (EPAANPAPAAPPAFQAPAPAPAERPAAAQRPA) show a composition bias toward low complexity. A compositionally biased stretch (gly residues) spans 168-185 (GGPGQGPRPGARPGGPGA). Positions 204 to 247 (GPGDRPERSERPDRGDRPQGDRPRSDRPQGERQQGDRPQGDRPG) are enriched in basic and acidic residues. The segment covering 285 to 304 (GGAPRPGNNPFASNQGMPRP) has biased composition (low complexity). A compositionally biased stretch (pro residues) spans 305–328 (QGGPRPTPAGPGGPRPGGPRPNPG). Over residues 329 to 338 (MMPARPTVGR) the composition is skewed to low complexity. The segment covering 339 to 409 (PGAGPGAGRP…GTQGAFGRAG (71 aa)) has biased composition (gly residues). A compositionally biased stretch (basic residues) spans 413–422 (VRGRKSKRAK). The tr-type G domain maps to 537-709 (ARPPVVTVMG…VLLTADASLD (173 aa)). The G1 stretch occupies residues 546-553 (GHVDHGKT). 546–553 (GHVDHGKT) lines the GTP pocket. The tract at residues 571 to 575 (GITQH) is G2. Residues 596–599 (DTPG) form a G3 region. Residues 596 to 600 (DTPGH) and 650 to 653 (NKVD) each bind GTP. Residues 650 to 653 (NKVD) are G4. Residues 686–688 (SAR) form a G5 region.

This sequence belongs to the TRAFAC class translation factor GTPase superfamily. Classic translation factor GTPase family. IF-2 subfamily.

It is found in the cytoplasm. One of the essential components for the initiation of protein synthesis. Protects formylmethionyl-tRNA from spontaneous hydrolysis and promotes its binding to the 30S ribosomal subunits. Also involved in the hydrolysis of GTP during the formation of the 70S ribosomal complex. The sequence is that of Translation initiation factor IF-2 from Kineococcus radiotolerans (strain ATCC BAA-149 / DSM 14245 / SRS30216).